The sequence spans 356 residues: Phosphate acyltransferase (356 aa).

The protein belongs to the PlsX family. As to quaternary structure, homodimer. Probably interacts with PlsY.

Its subcellular location is the cytoplasm. The catalysed reaction is a fatty acyl-[ACP] + phosphate = an acyl phosphate + holo-[ACP]. It participates in lipid metabolism; phospholipid metabolism. Functionally, catalyzes the reversible formation of acyl-phosphate (acyl-PO(4)) from acyl-[acyl-carrier-protein] (acyl-ACP). This enzyme utilizes acyl-ACP as fatty acyl donor, but not acyl-CoA. This Bartonella henselae (strain ATCC 49882 / DSM 28221 / CCUG 30454 / Houston 1) (Rochalimaea henselae) protein is Phosphate acyltransferase.